Here is a 319-residue protein sequence, read N- to C-terminus: MKRIGVLTSGGDSPGMNAAIRSVVRKAIYHGVEVYGVYHGYAGLIAGNIKKLEVGDVGDIIHRGGTILYTARCPEFKTEEGQKKGIEQLKKHGIEGLVVIGGDGSYQGAKKLTEHGFPCVGVPGTIDNDIPGTDFTIGFDTALNTVIDAIDKIRDTATSHERTYVIEVMGRHAGDIALWSGLAGGAETILIPEADYDMNDVIARLKRGHERGKKHSIIIVAEGVGSGVDFGRQIQEATGFETRVTVLGHVQRGGSPTAFDRVLASRLGARAVELLLEGKGGRCVGIQNNQLVDHDIAEALANKHTIDQRMYALSKELSI.

ATP is bound at residue Gly11. Residues 21-25 (RSVVR) and Asp59 each bind ADP. ATP-binding positions include 72-73 (RC) and 102-105 (GDGS). Residue Asp103 coordinates Mg(2+). 125-127 (TID) is a substrate binding site. Catalysis depends on Asp127, which acts as the Proton acceptor. ADP is bound at residue Arg154. Substrate contacts are provided by residues Arg162 and 169 to 171 (MGR). ADP is bound by residues 185 to 187 (GAE), Arg211, and 213 to 215 (KKH). Substrate contacts are provided by residues Glu222, Arg243, and 249–252 (HVQR).

The protein belongs to the phosphofructokinase type A (PFKA) family. ATP-dependent PFK group I subfamily. Prokaryotic clade 'B1' sub-subfamily. As to quaternary structure, homotetramer. Requires Mg(2+) as cofactor.

It is found in the cytoplasm. The enzyme catalyses beta-D-fructose 6-phosphate + ATP = beta-D-fructose 1,6-bisphosphate + ADP + H(+). It functions in the pathway carbohydrate degradation; glycolysis; D-glyceraldehyde 3-phosphate and glycerone phosphate from D-glucose: step 3/4. Allosterically activated by ADP and other diphosphonucleosides, and allosterically inhibited by phosphoenolpyruvate. Catalyzes the phosphorylation of D-fructose 6-phosphate to fructose 1,6-bisphosphate by ATP, the first committing step of glycolysis. This Geobacillus stearothermophilus (Bacillus stearothermophilus) protein is ATP-dependent 6-phosphofructokinase.